The chain runs to 175 residues: MPTILILNGPNLNLLGLREPHIYGSTTLQDVENICIELGKQHNVTVDAFQSNHEGQLIDRIHEARNKVDLIVINPAAYTHTSVAIRDALLGVSIPFIEVHISNVHAREQWRHHSYFSDKAVACIVGLGTFGYEAAIQHATLKQFKDLTFRYKRGDYGEVIYYYESLPNPILVVVL.

Tyr-23 serves as the catalytic Proton acceptor. Substrate is bound by residues Asn-74, His-80, and Asp-87. Catalysis depends on His-100, which acts as the Proton donor. Substrate contacts are provided by residues Ile-101–Ser-102 and Arg-111.

This sequence belongs to the type-II 3-dehydroquinase family. Homododecamer. Adopts a ring-like structure, composed of an arrangement of two hexameric rings stacked on top of one another.

It carries out the reaction 3-dehydroquinate = 3-dehydroshikimate + H2O. The protein operates within aromatic compound metabolism; 3,4-dihydroxybenzoate biosynthesis; 3,4-dihydroxybenzoate from 3-dehydroquinate: step 1/2. In terms of biological role, is involved in the catabolism of quinate. Allows the utilization of quinate as carbon source via the beta-ketoadipate pathway. This is Catabolic 3-dehydroquinase from Talaromyces marneffei (strain ATCC 18224 / CBS 334.59 / QM 7333) (Penicillium marneffei).